Consider the following 516-residue polypeptide: uncharacterized protein (516 aa).

Residues 31 to 185 (ACIFLSKFDM…LDKFDIFEKF (155 aa)) form the uDENN domain. The region spanning 211-365 (HLVEYLPYWT…LEVYEKLILG (155 aa)) is the cDENN domain. Residues 367–513 (LQEDASTNAT…DISNLPECLG (147 aa)) enclose the dDENN domain. S-palmitoyl cysteine attachment occurs at residues cysteine 511 and cysteine 516.

In terms of processing, palmitoylated by AKR1.

The protein localises to the lipid droplet. Functionally, may be involved in lipid metabolism. This is an uncharacterized protein from Saccharomyces cerevisiae (strain ATCC 204508 / S288c) (Baker's yeast).